The following is a 254-amino-acid chain: MGRVIRNQRKGAGSIFTSHTRLRQGAAKLRTLDYAERHGYIRGIVKQIVHDSGRGAPLAKVVFRDPYKYRLREEIFIANEGVHTGQFIYAGKKASLNVGNVLPLGSVPEGTIVSNVEEKPGDRGALARASGNYVIIIGHNPDENKTRVRLPSGAKKVISSDARGVIGVIAGGGRVDKPLLKAGRAFHKYRLKRNSWPKTRGVAMNPVDHPHGGGNHQHIGKASTISRGAVSGQKAGLIAARRTGLLRGSQKTQD.

A Glycyl lysine isopeptide (Lys-Gly) (interchain with G-Cter in ubiquitin) cross-link involves residue Lys-46. At Ser-52 the chain carries Phosphoserine. A Glycyl lysine isopeptide (Lys-Gly) (interchain with G-Cter in ubiquitin) cross-link involves residue Lys-93. Ser-95 bears the Phosphoserine mark. Residues Lys-119 and Lys-145 each participate in a glycyl lysine isopeptide (Lys-Gly) (interchain with G-Cter in ubiquitin) cross-link. 3 positions are modified to phosphoserine: Ser-159, Ser-160, and Ser-249.

This sequence belongs to the universal ribosomal protein uL2 family. Component of the large ribosomal subunit (LSU). Mature yeast ribosomes consist of a small (40S) and a large (60S) subunit. The 40S small subunit contains 1 molecule of ribosomal RNA (18S rRNA) and 33 different proteins (encoded by 57 genes). The large 60S subunit contains 3 rRNA molecules (25S, 5.8S and 5S rRNA) and 46 different proteins (encoded by 81 genes).

Its subcellular location is the cytoplasm. In terms of biological role, component of the ribosome, a large ribonucleoprotein complex responsible for the synthesis of proteins in the cell. The small ribosomal subunit (SSU) binds messenger RNAs (mRNAs) and translates the encoded message by selecting cognate aminoacyl-transfer RNA (tRNA) molecules. The large subunit (LSU) contains the ribosomal catalytic site termed the peptidyl transferase center (PTC), which catalyzes the formation of peptide bonds, thereby polymerizing the amino acids delivered by tRNAs into a polypeptide chain. The nascent polypeptides leave the ribosome through a tunnel in the LSU and interact with protein factors that function in enzymatic processing, targeting, and the membrane insertion of nascent chains at the exit of the ribosomal tunnel. This Saccharomyces cerevisiae (strain ATCC 204508 / S288c) (Baker's yeast) protein is Large ribosomal subunit protein uL2B.